Here is a 203-residue protein sequence, read N- to C-terminus: VPS4-associated protein 1 (203 aa).

Residues 99 to 109 show a composition bias toward basic and acidic residues; the sequence is EKETNNSKDPD. Disordered regions lie at residues 99-125 and 171-193; these read EKET…AKND and QVNR…EELL. Residues 110-120 show a composition bias toward low complexity; it reads PTTTDSTDTSP. Residues 121–157 are a coiled coil; the sequence is QAKNDAEILSETKKQYSKILDKVTELQRKNRKYELAK. A compositionally biased stretch (basic and acidic residues) spans 171-182; the sequence is QVNRERYLKEQE.

In terms of assembly, interacts with VPS4.

The protein resides in the cytoplasm. It is found in the endosome. In terms of biological role, VPS4-associated protein involved in trafficking to the vacuole. This chain is VPS4-associated protein 1 (VFA1), found in Saccharomyces cerevisiae (strain ATCC 204508 / S288c) (Baker's yeast).